Consider the following 231-residue polypeptide: MDFALPTTASQASAFMNNSSLTFPVLPNANNEATNETADSGDAEVSKNEGVSGIVPTLQNIVATVNLDCRLDLKTIALHARNAEYNPKRFAAVIMRIREPKSTALIFASGKMVVLGGKSEDDSKLASRKYARIIQKLGFNAKFTDFKIQNIVGSCDVKFPIRLEGLAYSHGTFSSYEPELFPGLIYRMVKPKVVLLIFVSGKIVLTGAKVREEIYQAFEAIYPVLSEFRKH.

A run of 2 repeats spans residues 58–134 (LQNI…ARII) and 148–225 (IQNI…YPVL).

Belongs to the TBP family. In terms of assembly, belongs to the TFIID complex together with the TBP-associated factors (TAFs). Binds DNA as monomer.

The protein localises to the nucleus. Functionally, general transcription factor that functions at the core of the DNA-binding multiprotein factor TFIID. Binding of TFIID to the TATA box is the initial transcriptional step of the pre-initiation complex (PIC), playing a role in the activation of eukaryotic genes transcribed by RNA polymerase II. The sequence is that of TATA-box-binding protein (tbp1) from Schizosaccharomyces pombe (strain 972 / ATCC 24843) (Fission yeast).